Reading from the N-terminus, the 148-residue chain is Nucleoside diphosphate kinase (148 aa).

Residues Lys-9, Phe-57, Arg-85, Thr-91, Arg-102, and Asn-112 each coordinate ATP. A Phosphothreonine modification is found at Thr-91. His-115 (pros-phosphohistidine intermediate) is an active-site residue. A Phosphoserine modification is found at Ser-122.

The protein belongs to the NDK family. Homotetramer. Mg(2+) is required as a cofactor.

The protein localises to the cytoplasm. It catalyses the reaction a 2'-deoxyribonucleoside 5'-diphosphate + ATP = a 2'-deoxyribonucleoside 5'-triphosphate + ADP. The enzyme catalyses a ribonucleoside 5'-diphosphate + ATP = a ribonucleoside 5'-triphosphate + ADP. Its function is as follows. Major role in the synthesis of nucleoside triphosphates other than ATP. The ATP gamma phosphate is transferred to the NDP beta phosphate via a ping-pong mechanism, using a phosphorylated active-site intermediate. This chain is Nucleoside diphosphate kinase, found in Bacillus anthracis.